The following is a 195-amino-acid chain: PABIR family member 1 (195 aa).

Belongs to the FAM122 family.

The sequence is that of PABIR family member 1 from Homo sapiens (Human).